A 394-amino-acid polypeptide reads, in one-letter code: Phosphoglycerate kinase (394 aa).

Residues 21-23, arginine 36, 59-62, arginine 118, and arginine 151 contribute to the substrate site; these read DFN and HLGR. Serine 183 carries the post-translational modification Phosphoserine. Lysine 201 and glycine 292 together coordinate ATP. Residue threonine 299 is modified to Phosphothreonine. Residues glutamate 323 and 350–353 contribute to the ATP site; that span reads GGDS.

It belongs to the phosphoglycerate kinase family. Monomer.

It localises to the cytoplasm. The catalysed reaction is (2R)-3-phosphoglycerate + ATP = (2R)-3-phospho-glyceroyl phosphate + ADP. It functions in the pathway carbohydrate degradation; glycolysis; pyruvate from D-glyceraldehyde 3-phosphate: step 2/5. The chain is Phosphoglycerate kinase from Bacillus cereus (strain G9842).